The primary structure comprises 430 residues: 26S protease regulatory subunit 6A (430 aa).

Residue 218 to 225 (GPPGTGKT) participates in ATP binding.

This sequence belongs to the AAA ATPase family. In terms of assembly, component of the 19S proteasome regulatory particle complex. The 26S proteasome consists of a 20S core particle (CP) and two 19S regulatory subunits (RP). The regulatory particle is made of a lid composed of 9 subunits, a base containing 6 ATPases including the PSMC3 homolog rpt-5 and few additional components.

It localises to the cytoplasm. The protein resides in the nucleus. Its function is as follows. Component of the 26S proteasome, a multiprotein complex involved in the ATP-dependent degradation of ubiquitinated proteins. This complex plays a key role in the maintenance of protein homeostasis by removing misfolded or damaged proteins, which could impair cellular functions, and by removing proteins whose functions are no longer required. Therefore, the proteasome participates in numerous cellular processes, including cell cycle progression, apoptosis, or DNA damage repair. Belongs to the heterohexameric ring of AAA (ATPases associated with diverse cellular activities) proteins that unfolds ubiquitinated target proteins that are concurrently translocated into a proteolytic chamber and degraded into peptides. This Caenorhabditis elegans protein is 26S protease regulatory subunit 6A.